The primary structure comprises 131 residues: Protein SOB FIVE-LIKE 4 (131 aa).

2 disordered regions span residues 1-21 and 40-131; these read MDKEECSSSESGWTTYLSSPI and IYNY…YRMK. Residues 8 to 18 are compositionally biased toward polar residues; that stretch reads SSESGWTTYLS. Positions 11–16 match the SOFL-A motif; it reads SGWTTY. The span at 46–58 shows a compositional bias: basic and acidic residues; sequence KVEHEEERNKDSD. Positions 60–69 match the SOFL-B motif; the sequence is SMASDASSGP. Residues 79 to 109 show a composition bias toward basic and acidic residues; that stretch reads KALDLKNGKNEGNSKSKNDDDHHNHYHDGKK. Positions 107-114 match the Nuclear localization signal motif; sequence GKKTSNSY. Residues 114-131 show a composition bias toward basic residues; sequence YRKKDKKKRENKSTYRMK.

The protein belongs to the SOFL plant protein family. Expressed, at low levels, in seedlings, roots, flowers and siliques.

It is found in the cytoplasm. Its subcellular location is the nucleus. Functionally, involved in cytokinin-mediated development. The sequence is that of Protein SOB FIVE-LIKE 4 from Arabidopsis thaliana (Mouse-ear cress).